Consider the following 350-residue polypeptide: Galactokinase (350 aa).

Residue 14–17 participates in substrate binding; the sequence is EHTD. ATP is bound by residues serine 46 and 96–102; that span reads GAGLSSS. The Mg(2+) site is built by serine 102 and glutamate 134. The active-site Proton acceptor is the aspartate 146. Tyrosine 196 is a binding site for substrate.

Belongs to the GHMP kinase family. GalK subfamily.

The protein localises to the cytoplasm. It carries out the reaction alpha-D-galactose + ATP = alpha-D-galactose 1-phosphate + ADP + H(+). The protein operates within carbohydrate metabolism; galactose metabolism. Catalyzes the transfer of the gamma-phosphate of ATP to D-galactose to form alpha-D-galactose-1-phosphate (Gal-1-P). This chain is Galactokinase, found in Thermotoga petrophila (strain ATCC BAA-488 / DSM 13995 / JCM 10881 / RKU-1).